The sequence spans 959 residues: Mitogen-activated protein kinase kinase kinase 13 (959 aa).

Residues 1–47 (MANPQEHLSCSSLPHLPLTENKTSGGRNELAAMGNHPSPKLPEDPQE) form a disordered region. The segment covering 7–18 (HLSCSSLPHLPL) has biased composition (low complexity). The region spanning 167–408 (ISELQWLGSG…FRQTLMHLDI (242 aa)) is the Protein kinase domain. Residues 173–181 (LGSGAQGAV) and lysine 194 contribute to the ATP site. Aspartate 278 serves as the catalytic Proton acceptor. Leucine-zipper stretches follow at residues 432 to 453 (VKKH…DEEL) and 485 to 506 (LSAI…EQAV). 4 disordered regions span residues 533 to 599 (KRKG…GSHS), 739 to 828 (GSLD…RQRP), 842 to 902 (SSEN…LSDK), and 927 to 959 (NPVQ…SATW). Residues 566–577 (SPLSGSPKMSTA) show a composition bias toward polar residues. Basic residues predominate over residues 581-593 (SRYRSKPRHRRGN). Composition is skewed to polar residues over residues 754–774 (DLSS…SERT) and 780–790 (SGCQSGISHQF). Residues 808–820 (DSSEEEGEVDSEV) show a composition bias toward acidic residues. A compositionally biased stretch (basic and acidic residues) spans 866 to 876 (SANRRQDRLAE). Residues 934-943 (SDCDSSEGEC) are compositionally biased toward acidic residues. The span at 947–959 (TVRTSKNYSSATW) shows a compositional bias: polar residues.

Belongs to the protein kinase superfamily. STE Ser/Thr protein kinase family. MAP kinase kinase kinase subfamily. Homodimer; forms dimers through the leucine-zipper motif. Interacts with the C-terminus of MAPK8IP1 through the kinase catalytic domain. Binds PRDX3. Associates with the IKK complex through the kinase domain. Mg(2+) is required as a cofactor. Autophosphorylated on serine and threonine residues.

It is found in the cytoplasm. Its subcellular location is the membrane. The catalysed reaction is L-seryl-[protein] + ATP = O-phospho-L-seryl-[protein] + ADP + H(+). It catalyses the reaction L-threonyl-[protein] + ATP = O-phospho-L-threonyl-[protein] + ADP + H(+). Activated by autophosphorylation and homodimerization. In terms of biological role, activates the JUN N-terminal pathway through activation of the MAP kinase kinase MAP2K7. Acts synergistically with PRDX3 to regulate the activation of NF-kappa-B in the cytosol. This activation is kinase-dependent and involves activating the IKK complex, the IKBKB-containing complex that phosphorylates inhibitors of NF-kappa-B. This Mus musculus (Mouse) protein is Mitogen-activated protein kinase kinase kinase 13 (Map3k13).